Consider the following 345-residue polypeptide: Tetraacyldisaccharide 4'-kinase (345 aa).

54 to 61 contacts ATP; the sequence is TLGGAGKT.

This sequence belongs to the LpxK family.

It carries out the reaction a lipid A disaccharide + ATP = a lipid IVA + ADP + H(+). It functions in the pathway glycolipid biosynthesis; lipid IV(A) biosynthesis; lipid IV(A) from (3R)-3-hydroxytetradecanoyl-[acyl-carrier-protein] and UDP-N-acetyl-alpha-D-glucosamine: step 6/6. Functionally, transfers the gamma-phosphate of ATP to the 4'-position of a tetraacyldisaccharide 1-phosphate intermediate (termed DS-1-P) to form tetraacyldisaccharide 1,4'-bis-phosphate (lipid IVA). In Allorhizobium ampelinum (strain ATCC BAA-846 / DSM 112012 / S4) (Agrobacterium vitis (strain S4)), this protein is Tetraacyldisaccharide 4'-kinase.